A 427-amino-acid polypeptide reads, in one-letter code: MTWFIDRRLNGKNKSMVNRQRFLRRYKAQIKQSISEAMNKRSVTDVDSGESVSIPTEDISEPMFHQGRGGLRHRVHPGNDHFVQNDRIERPQGGGGGSGSGQGQASQDGEGQDEFVFQISKDEYLDLLFEDLALPNLKQNQQRQLTEYKTHRAGYTANGVPANISVVRSLQNSLARRTAMTAGKRRELHALEENLAIISNSEPAQLLEEERLRKEIAELRAKIERVPFIDTFDLRYKNYEKRPDPSSQAVMFCLMDVSGSMDQSTKDMAKRFYILLYLFLSRTYKNVEVVYIRHHTQAKEVDEHEFFYSQETGGTIVSSALKLMDEVVKERYNPAQWNIYAAQASDGDNWADDSPLCHEILAKKLLPVVRYYSYIEITRRAHQTLWREYEHLQSTFDNFAMQHIRDQDDIYPVFRELFHKQNATAKD.

Basic and acidic residues predominate over residues 79–90; it reads NDHFVQNDRIER. A disordered region spans residues 79 to 110; that stretch reads NDHFVQNDRIERPQGGGGGSGSGQGQASQDGE. Gly residues predominate over residues 92–102; it reads QGGGGGSGSGQ.

Belongs to the UPF0229 family.

In Shigella boydii serotype 18 (strain CDC 3083-94 / BS512), this protein is UPF0229 protein YeaH.